Reading from the N-terminus, the 510-residue chain is Bifunctional purine biosynthesis protein PurH (510 aa).

Residues 1 to 144 (MSKRALISVT…KNYKDVIVVV (144 aa)) enclose the MGS-like domain.

It belongs to the PurH family.

It carries out the reaction (6R)-10-formyltetrahydrofolate + 5-amino-1-(5-phospho-beta-D-ribosyl)imidazole-4-carboxamide = 5-formamido-1-(5-phospho-D-ribosyl)imidazole-4-carboxamide + (6S)-5,6,7,8-tetrahydrofolate. The enzyme catalyses IMP + H2O = 5-formamido-1-(5-phospho-D-ribosyl)imidazole-4-carboxamide. The protein operates within purine metabolism; IMP biosynthesis via de novo pathway; 5-formamido-1-(5-phospho-D-ribosyl)imidazole-4-carboxamide from 5-amino-1-(5-phospho-D-ribosyl)imidazole-4-carboxamide (10-formyl THF route): step 1/1. Its pathway is purine metabolism; IMP biosynthesis via de novo pathway; IMP from 5-formamido-1-(5-phospho-D-ribosyl)imidazole-4-carboxamide: step 1/1. The sequence is that of Bifunctional purine biosynthesis protein PurH from Clostridioides difficile (strain 630) (Peptoclostridium difficile).